The following is a 440-amino-acid chain: tRNA modification GTPase MnmE (440 aa).

Residues Arg23, Glu80, and Lys120 each coordinate (6S)-5-formyl-5,6,7,8-tetrahydrofolate. Residues 217–366 form the TrmE-type G domain; that stretch reads GLKIVIAGEP…LLAMLQAHLP (150 aa). Asn227 contacts K(+). GTP-binding positions include 227-232, 246-252, and 271-274; these read NAGKSS, TEIAGTT, and DTAG. Ser231 serves as a coordination point for Mg(2+). Positions 246, 248, and 251 each coordinate K(+). Thr252 contributes to the Mg(2+) binding site. Lys440 is a (6S)-5-formyl-5,6,7,8-tetrahydrofolate binding site.

The protein belongs to the TRAFAC class TrmE-Era-EngA-EngB-Septin-like GTPase superfamily. TrmE GTPase family. As to quaternary structure, homodimer. Heterotetramer of two MnmE and two MnmG subunits. K(+) serves as cofactor.

Its subcellular location is the cytoplasm. Exhibits a very high intrinsic GTPase hydrolysis rate. Involved in the addition of a carboxymethylaminomethyl (cmnm) group at the wobble position (U34) of certain tRNAs, forming tRNA-cmnm(5)s(2)U34. The chain is tRNA modification GTPase MnmE from Sinorhizobium medicae (strain WSM419) (Ensifer medicae).